The following is a 119-amino-acid chain: NADH-quinone oxidoreductase subunit A (119 aa).

The next 3 helical transmembrane spans lie at 7 to 27 (YPVL…VSIG), 63 to 83 (LVAI…PWGV), and 88 to 108 (IGWP…LGFA).

Belongs to the complex I subunit 3 family. NDH-1 is composed of 14 different subunits. Subunits NuoA, H, J, K, L, M, N constitute the membrane sector of the complex.

Its subcellular location is the cell inner membrane. The enzyme catalyses a quinone + NADH + 5 H(+)(in) = a quinol + NAD(+) + 4 H(+)(out). Its function is as follows. NDH-1 shuttles electrons from NADH, via FMN and iron-sulfur (Fe-S) centers, to quinones in the respiratory chain. The immediate electron acceptor for the enzyme in this species is believed to be ubiquinone. Couples the redox reaction to proton translocation (for every two electrons transferred, four hydrogen ions are translocated across the cytoplasmic membrane), and thus conserves the redox energy in a proton gradient. This is NADH-quinone oxidoreductase subunit A from Burkholderia mallei (strain NCTC 10247).